We begin with the raw amino-acid sequence, 136 residues long: Small ribosomal subunit protein uS19 (136 aa).

Residues 114–136 form a disordered region; it reads RSRVSHGSAGVGATRSSKFVPLK.

Belongs to the universal ribosomal protein uS19 family.

Protein S19 forms a complex with S13 that binds strongly to the 16S ribosomal RNA. The polypeptide is Small ribosomal subunit protein uS19 (Methanosarcina acetivorans (strain ATCC 35395 / DSM 2834 / JCM 12185 / C2A)).